A 295-amino-acid chain; its full sequence is ATP synthase gamma chain (295 aa).

It belongs to the ATPase gamma chain family. F-type ATPases have 2 components, CF(1) - the catalytic core - and CF(0) - the membrane proton channel. CF(1) has five subunits: alpha(3), beta(3), gamma(1), delta(1), epsilon(1). CF(0) has three main subunits: a, b and c.

The protein localises to the cell inner membrane. Produces ATP from ADP in the presence of a proton gradient across the membrane. The gamma chain is believed to be important in regulating ATPase activity and the flow of protons through the CF(0) complex. This is ATP synthase gamma chain from Chlorobium phaeobacteroides (strain BS1).